A 79-amino-acid polypeptide reads, in one-letter code: MLILTRRPGESLHLGDHIKITVLGVQGKQIKIGLEVPDDMQVYREEVYLRVLEQNRQALCAMDSDVLAAAKLWPKKTNE.

The protein belongs to the CsrA/RsmA family. Homodimer; the beta-strands of each monomer intercalate to form a hydrophobic core, while the alpha-helices form wings that extend away from the core.

The protein localises to the cytoplasm. In terms of biological role, a translational regulator that binds mRNA to regulate translation initiation and/or mRNA stability. Usually binds in the 5'-UTR at or near the Shine-Dalgarno sequence preventing ribosome-binding, thus repressing translation. Its main target seems to be the major flagellin gene, while its function is anatagonized by FliW. This is Translational regulator CsrA from Solidesulfovibrio magneticus (strain ATCC 700980 / DSM 13731 / RS-1) (Desulfovibrio magneticus).